The chain runs to 459 residues: Cysteine--tRNA ligase (459 aa).

Residue Cys-27 coordinates Zn(2+). The short motif at 29-39 (PTVYDDAHLGH) is the 'HIGH' region element. Zn(2+) is bound by residues Cys-202, His-231, and Glu-235. The 'KMSKS' region signature appears at 263–267 (KMSKS). An ATP-binding site is contributed by Lys-266.

Belongs to the class-I aminoacyl-tRNA synthetase family. In terms of assembly, monomer. Zn(2+) serves as cofactor.

The protein localises to the cytoplasm. The catalysed reaction is tRNA(Cys) + L-cysteine + ATP = L-cysteinyl-tRNA(Cys) + AMP + diphosphate. The polypeptide is Cysteine--tRNA ligase (Campylobacter fetus subsp. fetus (strain 82-40)).